A 522-amino-acid chain; its full sequence is Probable cytosolic Fe-S cluster assembly factor narfl (522 aa).

Residues Cys-26, Cys-73, Cys-76, Cys-79, Cys-205, Cys-281, Cys-439, and Cys-443 each coordinate [4Fe-4S] cluster.

The protein belongs to the NARF family.

Component of the cytosolic iron-sulfur (Fe/S) protein assembly machinery. Required for maturation of extramitochondrial Fe/S proteins. This chain is Probable cytosolic Fe-S cluster assembly factor narfl (narfl), found in Dictyostelium discoideum (Social amoeba).